The primary structure comprises 447 residues: Argininosuccinate synthase (447 aa).

Residues 17 to 25 (AFSGGLDTS) and alanine 43 contribute to the ATP site. Position 99 (tyrosine 99) interacts with L-citrulline. ATP contacts are provided by glycine 129 and threonine 131. L-aspartate contacts are provided by threonine 131, asparagine 135, and aspartate 136. Asparagine 135 lines the L-citrulline pocket. Aspartate 136 serves as a coordination point for ATP. Arginine 139 and serine 192 together coordinate L-citrulline. Aspartate 194 contributes to the ATP binding site. The L-citrulline site is built by threonine 201, glutamate 203, and glutamate 280.

The protein belongs to the argininosuccinate synthase family. Type 2 subfamily. In terms of assembly, homotetramer.

It is found in the cytoplasm. It carries out the reaction L-citrulline + L-aspartate + ATP = 2-(N(omega)-L-arginino)succinate + AMP + diphosphate + H(+). It functions in the pathway amino-acid biosynthesis; L-arginine biosynthesis; L-arginine from L-ornithine and carbamoyl phosphate: step 2/3. In Escherichia coli O8 (strain IAI1), this protein is Argininosuccinate synthase.